Reading from the N-terminus, the 170-residue chain is Peptide deformylase (170 aa).

Fe cation is bound by residues Cys94 and His136. Residue Glu137 is part of the active site. Position 140 (His140) interacts with Fe cation.

It belongs to the polypeptide deformylase family. The cofactor is Fe(2+).

The enzyme catalyses N-terminal N-formyl-L-methionyl-[peptide] + H2O = N-terminal L-methionyl-[peptide] + formate. Functionally, removes the formyl group from the N-terminal Met of newly synthesized proteins. Requires at least a dipeptide for an efficient rate of reaction. N-terminal L-methionine is a prerequisite for activity but the enzyme has broad specificity at other positions. In Stenotrophomonas maltophilia (strain R551-3), this protein is Peptide deformylase.